The following is a 540-amino-acid chain: Amino acid transporter AVT1B (540 aa).

Over residues 1-11 (MNHSTSDQSLY) the composition is skewed to polar residues. Positions 1–55 (MNHSTSDQSLYIESDDGDDERKHLSDDEDDDGTLSDTSDAYNQNQHHLSKASPYS) are disordered. 11 consecutive transmembrane segments (helical) span residues 155 to 175 (AVLN…PYAV), 180 to 200 (WLGL…GLLL), 227 to 247 (ILVS…YIIL), 273 to 293 (LFAL…DLSV), 297 to 317 (ISAG…WVGL), 332 to 352 (LATL…HGVF), 367 to 387 (AVLL…AVMG), 412 to 432 (IALW…LSPV), 452 to 474 (IAIR…FFGL), 478 to 500 (LIGS…LSIL), and 511 to 531 (ICIL…YSAL).

The protein belongs to the amino acid/polyamine transporter 2 family. Amino acid/auxin permease (AAAP) (TC 2.A.18.5) subfamily.

Its subcellular location is the membrane. The chain is Amino acid transporter AVT1B from Arabidopsis thaliana (Mouse-ear cress).